We begin with the raw amino-acid sequence, 276 residues long: Pyridinium-3,5-bisthiocarboxylic acid mononucleotide synthase (276 aa).

Cysteine 176 functions as the Nucleophile and sulfur donor in the catalytic mechanism. Cysteine 176 is subject to 2,3-didehydroalanine (Cys).

The protein belongs to the LarE family.

The enzyme catalyses pyridinium-3,5-dicarboxylate mononucleotide + [LarE protein]-L-cysteine + ATP = [LarE protein]-dehydroalanine + pyridinium-3-carboxylate-5-thiocarboxylate mononucleotide + AMP + diphosphate + H(+). It carries out the reaction [LarE protein]-L-cysteine + pyridinium-3-carboxylate-5-thiocarboxylate mononucleotide + ATP = pyridinium-3,5-bisthiocarboxylate mononucleotide + [LarE protein]-dehydroalanine + AMP + diphosphate + H(+). Functionally, involved in the biosynthesis of a nickel-pincer cofactor ((SCS)Ni(II) pincer complex). Catalyzes the ATP-dependent incorporation of two sulfur atoms in pyridinium-3,5-biscarboxylic acid mononucleotide (P2CMN) to yield pyridinium-3,5-bisthiocarboxylic acid mononucleotide (P2TMN). The source of sulfur is the enzyme itself: Cys-176 of LarE is the sulfur donor, thereby being converted into dehydroalanine, and is not regenerated in vivo. Thus, two molecules of LarE undergo sacrificial sulfur transfer to create one P2TMN. Binds nickel. Is required for the activation of the lactate racemase LarA. May also be involved in the activation of other nickel-pincer cofactor-dependent enzymes. This Lactiplantibacillus plantarum (strain ATCC BAA-793 / NCIMB 8826 / WCFS1) (Lactobacillus plantarum) protein is Pyridinium-3,5-bisthiocarboxylic acid mononucleotide synthase.